The primary structure comprises 254 residues: Alcohol dehydrogenase 1 (254 aa).

10 to 33 (FVAGLGGIGFDTSREIVKSGPKNL) lines the NAD(+) pocket. Residue serine 138 participates in substrate binding. The Proton acceptor role is filled by tyrosine 151.

This sequence belongs to the short-chain dehydrogenases/reductases (SDR) family. Homodimer.

It carries out the reaction a primary alcohol + NAD(+) = an aldehyde + NADH + H(+). It catalyses the reaction a secondary alcohol + NAD(+) = a ketone + NADH + H(+). The sequence is that of Alcohol dehydrogenase 1 (Adh1) from Drosophila navojoa (Fruit fly).